The chain runs to 311 residues: GTP cyclohydrolase FolE2 (311 aa).

The protein belongs to the GTP cyclohydrolase IV family.

The catalysed reaction is GTP + H2O = 7,8-dihydroneopterin 3'-triphosphate + formate + H(+). It participates in cofactor biosynthesis; 7,8-dihydroneopterin triphosphate biosynthesis; 7,8-dihydroneopterin triphosphate from GTP: step 1/1. In terms of biological role, converts GTP to 7,8-dihydroneopterin triphosphate. The protein is GTP cyclohydrolase FolE2 of Xanthomonas campestris pv. campestris (strain 8004).